The chain runs to 438 residues: ATP-dependent protease ATPase subunit HslU (438 aa).

ATP is bound by residues Ile-18, 60–65, Asp-251, Glu-316, and Arg-388; that span reads GVGKTE.

It belongs to the ClpX chaperone family. HslU subfamily. In terms of assembly, a double ring-shaped homohexamer of HslV is capped on each side by a ring-shaped HslU homohexamer. The assembly of the HslU/HslV complex is dependent on binding of ATP.

It localises to the cytoplasm. ATPase subunit of a proteasome-like degradation complex; this subunit has chaperone activity. The binding of ATP and its subsequent hydrolysis by HslU are essential for unfolding of protein substrates subsequently hydrolyzed by HslV. HslU recognizes the N-terminal part of its protein substrates and unfolds these before they are guided to HslV for hydrolysis. This Jannaschia sp. (strain CCS1) protein is ATP-dependent protease ATPase subunit HslU.